Reading from the N-terminus, the 106-residue chain is ATP-dependent Clp protease adapter protein ClpS (106 aa).

It belongs to the ClpS family. In terms of assembly, binds to the N-terminal domain of the chaperone ClpA.

Functionally, involved in the modulation of the specificity of the ClpAP-mediated ATP-dependent protein degradation. In Salmonella gallinarum (strain 287/91 / NCTC 13346), this protein is ATP-dependent Clp protease adapter protein ClpS.